The chain runs to 261 residues: MFDIGVNLTSTQFAKDRDQVVKRAKDAGITGLLITGTNALESQQAQSLATRRPGYCWSTAGVHPHHASEWSGETAATLKRLAESPEVVAIGECGLDFNRNISEPEQQVYAFNAQLELAAELAMPVFLHCRDAHDRFLAVLTPWLPTLPGAVVHCFTGTREELEACLAAGLSIGITGWVCDERRGVELRELMPLIPADRLLLETDAPYLLPRDMRPRPPSRRNEPCFLPHIVQVVAGLRGEEPEALGRQCDANARKLFRLPA.

Positions 92, 128, and 153 each coordinate a divalent metal cation.

The protein belongs to the metallo-dependent hydrolases superfamily. TatD-type hydrolase family. TatD subfamily. In terms of assembly, monomer. Mg(2+) serves as cofactor.

The protein localises to the cytoplasm. Functionally, 3'-5' exonuclease that prefers single-stranded DNA and RNA. May play a role in the H(2)O(2)-induced DNA damage repair. The protein is 3'-5' ssDNA/RNA exonuclease TatD of Erwinia billingiae (strain Eb661).